The following is a 379-amino-acid chain: UDP-N-acetylglucosamine--N-acetylmuramyl-(pentapeptide) pyrophosphoryl-undecaprenol N-acetylglucosamine transferase (379 aa).

Residues 17–19 (TGG), Asn-128, Arg-169, Ser-197, and Gln-298 each bind UDP-N-acetyl-alpha-D-glucosamine.

This sequence belongs to the glycosyltransferase 28 family. MurG subfamily.

The protein resides in the cell inner membrane. It carries out the reaction di-trans,octa-cis-undecaprenyl diphospho-N-acetyl-alpha-D-muramoyl-L-alanyl-D-glutamyl-meso-2,6-diaminopimeloyl-D-alanyl-D-alanine + UDP-N-acetyl-alpha-D-glucosamine = di-trans,octa-cis-undecaprenyl diphospho-[N-acetyl-alpha-D-glucosaminyl-(1-&gt;4)]-N-acetyl-alpha-D-muramoyl-L-alanyl-D-glutamyl-meso-2,6-diaminopimeloyl-D-alanyl-D-alanine + UDP + H(+). The protein operates within cell wall biogenesis; peptidoglycan biosynthesis. Its function is as follows. Cell wall formation. Catalyzes the transfer of a GlcNAc subunit on undecaprenyl-pyrophosphoryl-MurNAc-pentapeptide (lipid intermediate I) to form undecaprenyl-pyrophosphoryl-MurNAc-(pentapeptide)GlcNAc (lipid intermediate II). This Brucella suis biovar 1 (strain 1330) protein is UDP-N-acetylglucosamine--N-acetylmuramyl-(pentapeptide) pyrophosphoryl-undecaprenol N-acetylglucosamine transferase.